The chain runs to 96 residues: uncharacterized protein (96 aa).

The span at 1-18 shows a compositional bias: basic and acidic residues; sequence MSNVDRYDVHRDGIEKDR. The segment at 1 to 96 is disordered; sequence MSNVDRYDVH…REQHHQPQKQ (96 aa). Polar residues predominate over residues 28 to 46; it reads QNGQSQSTMDNRPPWNNDT. Positions 70–96 are enriched in basic and acidic residues; the sequence is TIDRQQEELTKNWTESLREQHHQPQKQ.

This is an uncharacterized protein from Caenorhabditis elegans.